Here is a 120-residue protein sequence, read N- to C-terminus: NAD(P)H-quinone oxidoreductase subunit 3 (120 aa).

3 consecutive transmembrane segments (helical) span residues 6-26, 64-84, and 89-109; these read GYDAFLGFLLIAAAVPVLALV, MFALVFVIFDVETVFLYPWAV, and LGLLAFIEALIFIAILLVALA.

The protein belongs to the complex I subunit 3 family. NDH-1 can be composed of about 15 different subunits; different subcomplexes with different compositions have been identified which probably have different functions.

The protein resides in the cellular thylakoid membrane. It carries out the reaction a plastoquinone + NADH + (n+1) H(+)(in) = a plastoquinol + NAD(+) + n H(+)(out). The catalysed reaction is a plastoquinone + NADPH + (n+1) H(+)(in) = a plastoquinol + NADP(+) + n H(+)(out). In terms of biological role, NDH-1 shuttles electrons from an unknown electron donor, via FMN and iron-sulfur (Fe-S) centers, to quinones in the respiratory and/or the photosynthetic chain. The immediate electron acceptor for the enzyme in this species is believed to be plastoquinone. Couples the redox reaction to proton translocation, and thus conserves the redox energy in a proton gradient. Cyanobacterial NDH-1 also plays a role in inorganic carbon-concentration. This chain is NAD(P)H-quinone oxidoreductase subunit 3, found in Synechococcus sp. (strain CC9605).